We begin with the raw amino-acid sequence, 99 residues long: DNA-directed RNA polymerase subunit omega (99 aa).

This sequence belongs to the RNA polymerase subunit omega family. In terms of assembly, the RNAP catalytic core consists of 2 alpha, 1 beta, 1 beta' and 1 omega subunit. When a sigma factor is associated with the core the holoenzyme is formed, which can initiate transcription.

It carries out the reaction RNA(n) + a ribonucleoside 5'-triphosphate = RNA(n+1) + diphosphate. Its function is as follows. Promotes RNA polymerase assembly. Latches the N- and C-terminal regions of the beta' subunit thereby facilitating its interaction with the beta and alpha subunits. The chain is DNA-directed RNA polymerase subunit omega from Deinococcus geothermalis (strain DSM 11300 / CIP 105573 / AG-3a).